Here is a 220-residue protein sequence, read N- to C-terminus: Deoxyribose-phosphate aldolase (220 aa).

The Proton donor/acceptor role is filled by Asp-89. Residue Lys-151 is the Schiff-base intermediate with acetaldehyde of the active site. Residue Lys-180 is the Proton donor/acceptor of the active site.

Belongs to the DeoC/FbaB aldolase family. DeoC type 1 subfamily.

The protein resides in the cytoplasm. It catalyses the reaction 2-deoxy-D-ribose 5-phosphate = D-glyceraldehyde 3-phosphate + acetaldehyde. Its pathway is carbohydrate degradation; 2-deoxy-D-ribose 1-phosphate degradation; D-glyceraldehyde 3-phosphate and acetaldehyde from 2-deoxy-alpha-D-ribose 1-phosphate: step 2/2. Functionally, catalyzes a reversible aldol reaction between acetaldehyde and D-glyceraldehyde 3-phosphate to generate 2-deoxy-D-ribose 5-phosphate. This chain is Deoxyribose-phosphate aldolase, found in Streptococcus pneumoniae serotype 19F (strain G54).